Here is a 174-residue protein sequence, read N- to C-terminus: Crossover junction endodeoxyribonuclease RuvC (174 aa).

Residues aspartate 8, glutamate 67, and aspartate 139 contribute to the active site. 3 residues coordinate Mg(2+): aspartate 8, glutamate 67, and aspartate 139.

The protein belongs to the RuvC family. In terms of assembly, homodimer which binds Holliday junction (HJ) DNA. The HJ becomes 2-fold symmetrical on binding to RuvC with unstacked arms; it has a different conformation from HJ DNA in complex with RuvA. In the full resolvosome a probable DNA-RuvA(4)-RuvB(12)-RuvC(2) complex forms which resolves the HJ. Mg(2+) is required as a cofactor.

The protein localises to the cytoplasm. It carries out the reaction Endonucleolytic cleavage at a junction such as a reciprocal single-stranded crossover between two homologous DNA duplexes (Holliday junction).. In terms of biological role, the RuvA-RuvB-RuvC complex processes Holliday junction (HJ) DNA during genetic recombination and DNA repair. Endonuclease that resolves HJ intermediates. Cleaves cruciform DNA by making single-stranded nicks across the HJ at symmetrical positions within the homologous arms, yielding a 5'-phosphate and a 3'-hydroxyl group; requires a central core of homology in the junction. The consensus cleavage sequence is 5'-(A/T)TT(C/G)-3'. Cleavage occurs on the 3'-side of the TT dinucleotide at the point of strand exchange. HJ branch migration catalyzed by RuvA-RuvB allows RuvC to scan DNA until it finds its consensus sequence, where it cleaves and resolves the cruciform DNA. This is Crossover junction endodeoxyribonuclease RuvC from Pseudoalteromonas translucida (strain TAC 125).